The primary structure comprises 195 residues: Phosphoheptose isomerase (195 aa).

Residues 36–195 enclose the SIS domain; it reads LVDSLKGDGI…IIEKELFGLD (160 aa). A substrate-binding site is contributed by 51 to 53; the sequence is NGG. Residues His60 and Glu64 each contribute to the Zn(2+) site. Substrate is bound by residues Glu64, 95–96, 121–123, Ser126, and Gln173; these read ND and TTS. The Zn(2+) site is built by Gln173 and His181.

Belongs to the SIS family. GmhA subfamily. It depends on Zn(2+) as a cofactor.

The protein localises to the cytoplasm. It catalyses the reaction 2 D-sedoheptulose 7-phosphate = D-glycero-alpha-D-manno-heptose 7-phosphate + D-glycero-beta-D-manno-heptose 7-phosphate. Its pathway is carbohydrate biosynthesis; D-glycero-D-manno-heptose 7-phosphate biosynthesis; D-glycero-alpha-D-manno-heptose 7-phosphate and D-glycero-beta-D-manno-heptose 7-phosphate from sedoheptulose 7-phosphate: step 1/1. Catalyzes the isomerization of sedoheptulose 7-phosphate in D-glycero-D-manno-heptose 7-phosphate. The sequence is that of Phosphoheptose isomerase from Leptospira biflexa serovar Patoc (strain Patoc 1 / Ames).